The following is a 454-amino-acid chain: Probable tRNA methyltransferase 9B (454 aa).

Residue S214 is modified to Phosphoserine.

Belongs to the methyltransferase superfamily. In terms of tissue distribution, down-regulated in breast, bladder, colorectal, cervix and testicular carcinomas.

May modify wobble uridines in specific arginine and glutamic acid tRNAs. Acts as a tumor suppressor by promoting the expression of LIN9. This Homo sapiens (Human) protein is Probable tRNA methyltransferase 9B.